The chain runs to 276 residues: Large ribosomal subunit protein uL2 (276 aa).

The disordered stretch occupies residues Arg-221–Lys-276. The span at Lys-252–Lys-276 shows a compositional bias: basic residues.

It belongs to the universal ribosomal protein uL2 family. As to quaternary structure, part of the 50S ribosomal subunit. Forms a bridge to the 30S subunit in the 70S ribosome.

One of the primary rRNA binding proteins. Required for association of the 30S and 50S subunits to form the 70S ribosome, for tRNA binding and peptide bond formation. It has been suggested to have peptidyltransferase activity; this is somewhat controversial. Makes several contacts with the 16S rRNA in the 70S ribosome. This Onion yellows phytoplasma (strain OY-M) protein is Large ribosomal subunit protein uL2.